The sequence spans 269 residues: F-box protein At5g52880 (269 aa).

The region spanning 109–155 is the F-box domain; it reads DIDIPSLPQDILIHIFSFLEISSLVSSAQVSRSWNQATHENSLWQSQ.

The polypeptide is F-box protein At5g52880 (Arabidopsis thaliana (Mouse-ear cress)).